A 313-amino-acid polypeptide reads, in one-letter code: Pantothenate synthetase (313 aa).

43-50 is an ATP binding site; sequence MGALHEGH. The Proton donor role is filled by H50. (R)-pantoate is bound at residue Q75. Q75 contacts beta-alanine. 161-164 contributes to the ATP binding site; sequence GEKD. Q167 contributes to the (R)-pantoate binding site. ATP-binding positions include V190 and 198–201; that span reads LSSR.

This sequence belongs to the pantothenate synthetase family. As to quaternary structure, homodimer.

It is found in the cytoplasm. The enzyme catalyses (R)-pantoate + beta-alanine + ATP = (R)-pantothenate + AMP + diphosphate + H(+). It participates in cofactor biosynthesis; (R)-pantothenate biosynthesis; (R)-pantothenate from (R)-pantoate and beta-alanine: step 1/1. Functionally, catalyzes the condensation of pantoate with beta-alanine in an ATP-dependent reaction via a pantoyl-adenylate intermediate. This Mycobacterium sp. (strain KMS) protein is Pantothenate synthetase.